A 99-amino-acid polypeptide reads, in one-letter code: UPF0473 protein Athe_1150 (99 aa).

This sequence belongs to the UPF0473 family.

The protein is UPF0473 protein Athe_1150 of Caldicellulosiruptor bescii (strain ATCC BAA-1888 / DSM 6725 / KCTC 15123 / Z-1320) (Anaerocellum thermophilum).